The primary structure comprises 685 residues: Sulfite reductase [ferredoxin], chloroplastic (685 aa).

A chloroplast-targeting transit peptide spans 1–51 (MTTSFAAAALRDPKLQIPNYHGLRSSSAASSLSRNALSVPSSTRSSSLIRA). 4 residues coordinate [4Fe-4S] cluster: Cys495, Cys501, Cys541, and Cys545. Position 545 (Cys545) interacts with siroheme.

It belongs to the nitrite and sulfite reductase 4Fe-4S domain family. As to quaternary structure, monomer. Interacts with ferredoxin. Siroheme serves as cofactor. Requires [4Fe-4S] cluster as cofactor. Phosphorylated; this phosphorylation reduces DNA-binding. Expressed in leaves, stems, and roots.

It is found in the plastid. Its subcellular location is the chloroplast stroma. It localises to the chloroplast nucleoid. The protein localises to the plastid stroma. It carries out the reaction hydrogen sulfide + 6 oxidized [2Fe-2S]-[ferredoxin] + 3 H2O = sulfite + 6 reduced [2Fe-2S]-[ferredoxin] + 7 H(+). Functionally, essential protein with sulfite reductase activity required in assimilatory sulfate reduction pathway during both primary and secondary metabolism and thus involved in development and growth. Its function is as follows. DNA-binding protein that binds to both double-stranded and single-stranded DNA without significant sequence specificity to reversibly repress the transcriptional activity of chloroplast nucleoids by promoting DNA compaction and possibly regulate DNA replication. In Pisum sativum (Garden pea), this protein is Sulfite reductase [ferredoxin], chloroplastic (SIR).